The following is a 429-amino-acid chain: Adenylosuccinate synthetase (429 aa).

Residues 12-18 (GDEGKGK) and 40-42 (GHT) each bind GTP. Catalysis depends on aspartate 13, which acts as the Proton acceptor. Positions 13 and 40 each coordinate Mg(2+). IMP-binding positions include 13-16 (DEGK), 38-41 (NAGH), threonine 128, arginine 142, glutamine 223, and arginine 302. Histidine 41 (proton donor) is an active-site residue. Residue 298–304 (TVTGRPR) participates in substrate binding. Residues arginine 304, 330–332 (LLD), and 412–414 (SVG) contribute to the GTP site.

This sequence belongs to the adenylosuccinate synthetase family. As to quaternary structure, homodimer. Mg(2+) is required as a cofactor.

The protein localises to the cytoplasm. The catalysed reaction is IMP + L-aspartate + GTP = N(6)-(1,2-dicarboxyethyl)-AMP + GDP + phosphate + 2 H(+). It functions in the pathway purine metabolism; AMP biosynthesis via de novo pathway; AMP from IMP: step 1/2. Functionally, plays an important role in the de novo pathway of purine nucleotide biosynthesis. Catalyzes the first committed step in the biosynthesis of AMP from IMP. The chain is Adenylosuccinate synthetase from Lactobacillus delbrueckii subsp. bulgaricus (strain ATCC 11842 / DSM 20081 / BCRC 10696 / JCM 1002 / NBRC 13953 / NCIMB 11778 / NCTC 12712 / WDCM 00102 / Lb 14).